The following is a 230-amino-acid chain: Orotate phosphoribosyltransferase (230 aa).

Residues arginine 107, lysine 108, lysine 111, histidine 113, and 133–141 (EDLTTAGGS) contribute to the 5-phospho-alpha-D-ribose 1-diphosphate site. Threonine 137 is a binding site for orotate.

It belongs to the purine/pyrimidine phosphoribosyltransferase family. PyrE subfamily. In terms of assembly, homodimer. The cofactor is Mg(2+).

It catalyses the reaction orotidine 5'-phosphate + diphosphate = orotate + 5-phospho-alpha-D-ribose 1-diphosphate. The protein operates within pyrimidine metabolism; UMP biosynthesis via de novo pathway; UMP from orotate: step 1/2. In terms of biological role, catalyzes the transfer of a ribosyl phosphate group from 5-phosphoribose 1-diphosphate to orotate, leading to the formation of orotidine monophosphate (OMP). The chain is Orotate phosphoribosyltransferase from Allorhizobium ampelinum (strain ATCC BAA-846 / DSM 112012 / S4) (Agrobacterium vitis (strain S4)).